Reading from the N-terminus, the 324-residue chain is Mitochondrial thiamine pyrophosphate carrier 1 (324 aa).

3 Solcar repeats span residues 12-110 (GNRI…ISSA), 119-205 (PQPV…LRSP), and 212-307 (PFGT…VLGL). 6 helical membrane-spanning segments follow: residues 15–35 (IQVV…VAPL), 79–99 (ITGL…YGGI), 125–145 (FISG…LDLL), 182–202 (TAAI…YEAL), 218–238 (AGAG…LDLV), and 282–299 (GLTV…VTMW).

It belongs to the mitochondrial carrier (TC 2.A.29) family.

It localises to the mitochondrion inner membrane. Functionally, mitochondrial transporter that mediates uptake of thiamine pyrophosphate (ThPP) into mitochondria. This chain is Mitochondrial thiamine pyrophosphate carrier 1 (TPC1), found in Ajellomyces capsulatus (strain NAm1 / WU24) (Darling's disease fungus).